The following is a 710-amino-acid chain: MVMACRVVNKRRHMGLQQLSSFAETGRTFLGPLKSSKFIIDEECHESVLISSTVRLLESLDLTSAVGQLLNEAVQAQNNTYRTGISTLLFLVGAWSSAVEECLHLGVPISIIVSVMSEGLNFCSEEVVSLHVPVHNIFDCMDSTKTFSQLETFSVSLCPFLQVPSDTDLIEELHGLKDVASQTLTISNLSGRPLKSYELFKPQTKVEADNNTSRTLKNSLLADTCCRQSILIHSRHFNRTDNTEGVSKPDGFQEHVTATHKTYRCNDLVELAVGLSHGDHSSMKLVEEAVQLQYQNACVQQGNCTKPFMFDISRIFTCCLPGLPETSSCVCPGYITVVSVSNNPVIKELQNQPVRIVLIEGDLTENYRHLGFNKSANIKTVLDSMQLQEDSSEELWANHVLQVLIQFKVNLVLVQGNVSERLIEKCINSKRLVIGSVNGSVMQAFAEAAGAVQVAYITQVNEDCVGDGVCVTFWRSSPLDVVDRNSRIAILLKTEGINLVTAVLTNPVTAQMQIKEDRFWTCAYRLYYALKEEKVFLGGGAVEFLCLSCLHILAEQSLKKENHACSGWLHNTSSWLASSLAIYRPTVLKFLANGWQKYLSTLLYNTANYSSEFEASTYIQHHLQNATDSGSPSSYILNEYSKLNSRIFNSDISNKLEQIPRVYDVVTPKIEAWRRALDLVLLALQTDSEIITGHGHTQRNSQELTGFLFL.

This sequence belongs to the TCP-1 chaperonin family. BBS12 subfamily. As to quaternary structure, component of the chaperonin-containing T-complex (TRiC), a heterooligomeric complex of about 850 to 900 kDa that forms two stacked rings, 12 to 16 nm in diameter. Interacts with MKKS.

It is found in the cell projection. Its subcellular location is the cilium. In terms of biological role, component of the chaperonin-containing T-complex (TRiC), a molecular chaperone complex that assists the folding of proteins upon ATP hydrolysis. As part of the TRiC complex may play a role in the assembly of BBSome, a complex involved in ciliogenesis regulating transports vesicles to the cilia. Involved in adipogenic differentiation. The polypeptide is Chaperonin-containing T-complex member BBS12 (BBS12) (Pongo abelii (Sumatran orangutan)).